A 204-amino-acid polypeptide reads, in one-letter code: Large ribosomal subunit protein eL15z (204 aa).

This sequence belongs to the eukaryotic ribosomal protein eL15 family.

In Picea mariana (Black spruce), this protein is Large ribosomal subunit protein eL15z (SB61).